A 212-amino-acid chain; its full sequence is Calaxin (212 aa).

3 consecutive EF-hand domains span residues 65 to 100 (TDDMIMDRVFRGFDKDNDGCISVSEWIHGLSLFLRG), 101 to 136 (TLDEKMKYCFEVFDLNGDGFISKEEMFHMLKNSLLK), and 146 to 181 (GIKDLVEITLKKMDHDHDGKLSFVDYEKAVREENLL). Ca(2+) is bound by residues Asp78, Asp80, Asp82, Cys84, Glu89, Asp114, Asn116, Asp118, Glu125, Asp159, Asp161, Asp163, Lys165, and Asp170.

As to quaternary structure, component of the outer dynein arm-docking complex along with ODAD1, ODAD2, ODAD3 and ODAD4.

The protein localises to the cytoplasm. Its subcellular location is the cytoskeleton. The protein resides in the cilium axoneme. It localises to the cell projection. It is found in the cilium. The protein localises to the flagellum. In terms of biological role, component of the outer dynein arm-docking complex (ODA-DC) that mediates outer dynein arms (ODA) binding onto the doublet microtubule. Seems to regulate the assembly of both ODAs and their axonemal docking complex onto ciliary microtubules. Regulates ciliary and flagellar motility and is required for cilia-driven determination of body laterality. In Mus musculus (Mouse), this protein is Calaxin (Clxn).